A 609-amino-acid polypeptide reads, in one-letter code: Copper resistance protein A (609 aa).

The tat-type signal signal peptide spans 1–32 (MESRTSRRTFVKGLAAAGVLGGLGLWRSPSWA). 4 residues coordinate Cu cation: His100, His102, His142, and His144. 5 tandem repeats follow at residues 367–374 (DDMGMGGM), 375–382 (DHGSMDGM), 408–415 (DHSKMSTM), 419–426 (DHGAMSGM), and 427–434 (DHGAMGGM). The segment at 367 to 434 (DDMGMGGMDH…GMDHGAMGGM (68 aa)) is 5 X 8 AA tandem repeats of D-H-X-X-M-X-G-M. The Cu cation site is built by His542, His545, His547, His590, Cys591, His592, His596, and Met601.

This sequence belongs to the multicopper oxidase family. CopA subfamily. Post-translationally, predicted to be exported by the Tat system. The position of the signal peptide cleavage has been experimentally proven.

The protein localises to the periplasm. Functionally, mediates copper resistance by sequestration of copper in the periplasm along with the copper-binding protein CopC. May have oxidase activity. This chain is Copper resistance protein A (copA), found in Pseudomonas syringae pv. tomato.